The chain runs to 129 residues: Fluoride-specific ion channel FluC 2 (129 aa).

The next 4 helical transmembrane spans lie at 4–24 (LDVMWVGLGGGVGSLGRWWIG), 39–59 (TFLINISGAFVIGYLSVLFGV), 65–85 (YGTMLNAGVLTGILGGYTTFS), and 100–120 (GGLAVFYLVASVLSGLFAAWL). Na(+)-binding residues include Gly-79 and Thr-82.

This sequence belongs to the fluoride channel Fluc/FEX (TC 1.A.43) family.

Its subcellular location is the cell inner membrane. The catalysed reaction is fluoride(in) = fluoride(out). Na(+) is not transported, but it plays an essential structural role and its presence is essential for fluoride channel function. Functionally, fluoride-specific ion channel. Important for reducing fluoride concentration in the cell, thus reducing its toxicity. This is Fluoride-specific ion channel FluC 2 from Brucella suis biovar 1 (strain 1330).